The following is a 326-amino-acid chain: Flap endonuclease 1 (326 aa).

Residues 1–98 are N-domain; the sequence is MGVQFGDFIP…KTRKVRREMK (98 aa). Residues Asp27, Asp80, Glu152, Glu154, Asp173, Asp175, and Asp224 each coordinate Mg(2+). The I-domain stretch occupies residues 116–245; it reads EAAKYAKRVS…KRAYELVRSG (130 aa). An interaction with PCNA region spans residues 317–325; it reads KQKTLDAWF.

This sequence belongs to the XPG/RAD2 endonuclease family. FEN1 subfamily. As to quaternary structure, interacts with PCNA. PCNA stimulates the nuclease activity without altering cleavage specificity. It depends on Mg(2+) as a cofactor.

In terms of biological role, structure-specific nuclease with 5'-flap endonuclease and 5'-3' exonuclease activities involved in DNA replication and repair. During DNA replication, cleaves the 5'-overhanging flap structure that is generated by displacement synthesis when DNA polymerase encounters the 5'-end of a downstream Okazaki fragment. Binds the unpaired 3'-DNA end and kinks the DNA to facilitate 5' cleavage specificity. Cleaves one nucleotide into the double-stranded DNA from the junction in flap DNA, leaving a nick for ligation. Also involved in the base excision repair (BER) pathway. Acts as a genome stabilization factor that prevents flaps from equilibrating into structures that lead to duplications and deletions. Also possesses 5'-3' exonuclease activity on nicked or gapped double-stranded DNA. The sequence is that of Flap endonuclease 1 from Methanocaldococcus jannaschii (strain ATCC 43067 / DSM 2661 / JAL-1 / JCM 10045 / NBRC 100440) (Methanococcus jannaschii).